A 273-amino-acid polypeptide reads, in one-letter code: Nucleotide-binding protein TT_C1664 (273 aa).

8–15 lines the ATP pocket; it reads GLSGAGKT. 57–60 is a GTP binding site; sequence DARA.

It belongs to the RapZ-like family.

Functionally, displays ATPase and GTPase activities. The polypeptide is Nucleotide-binding protein TT_C1664 (Thermus thermophilus (strain ATCC BAA-163 / DSM 7039 / HB27)).